The primary structure comprises 726 residues: Delta-1-pyrroline-5-carboxylate synthase B (726 aa).

A glutamate 5-kinase region spans residues 1 to 296; that stretch reads MTEIDRSRAF…WAPVVDTTSR (296 aa). The substrate site is built by S60, D157, and N176. ATP contacts are provided by residues 196–197 and 236–242; these read SD and RGGMTAK. The segment at 297–717 is gamma-glutamyl phosphate reductase; the sequence is DMAVAARESS…YTHKDLPVLQ (421 aa).

It in the N-terminal section; belongs to the glutamate 5-kinase family. In the C-terminal section; belongs to the gamma-glutamyl phosphate reductase family.

It catalyses the reaction L-glutamate + ATP = L-glutamyl 5-phosphate + ADP. The enzyme catalyses L-glutamate 5-semialdehyde + phosphate + NADP(+) = L-glutamyl 5-phosphate + NADPH + H(+). It functions in the pathway amino-acid biosynthesis; L-proline biosynthesis; L-glutamate 5-semialdehyde from L-glutamate: step 1/2. It participates in amino-acid biosynthesis; L-proline biosynthesis; L-glutamate 5-semialdehyde from L-glutamate: step 2/2. Its function is as follows. P5CS plays a key role in proline biosynthesis, leading to osmoregulation in plants. In Arabidopsis thaliana (Mouse-ear cress), this protein is Delta-1-pyrroline-5-carboxylate synthase B (P5CSB).